The sequence spans 509 residues: Steroid 17-alpha-hydroxylase/17,20 lyase (509 aa).

Asn202 lines the substrate pocket. Cys442 serves as a coordination point for heme.

This sequence belongs to the cytochrome P450 family. Heme is required as a cofactor.

The protein resides in the endoplasmic reticulum membrane. It localises to the microsome membrane. The enzyme catalyses a C21-steroid + reduced [NADPH--hemoprotein reductase] + O2 = a 17alpha-hydroxy-C21-steroid + oxidized [NADPH--hemoprotein reductase] + H2O + H(+). It carries out the reaction progesterone + reduced [NADPH--hemoprotein reductase] + O2 = 17alpha-hydroxyprogesterone + oxidized [NADPH--hemoprotein reductase] + H2O + H(+). The catalysed reaction is pregnenolone + reduced [NADPH--hemoprotein reductase] + O2 = 17alpha-hydroxypregnenolone + oxidized [NADPH--hemoprotein reductase] + H2O + H(+). It catalyses the reaction 17alpha-hydroxyprogesterone + reduced [NADPH--hemoprotein reductase] + O2 = androst-4-ene-3,17-dione + acetate + oxidized [NADPH--hemoprotein reductase] + H2O + 2 H(+). The enzyme catalyses 17alpha-hydroxyprogesterone + reduced [NADPH--hemoprotein reductase] + O2 = 16alpha,17alpha-dihydroxyprogesterone + oxidized [NADPH--hemoprotein reductase] + H2O + H(+). It carries out the reaction 16alpha,17alpha-dihydroxyprogesterone + reduced [NADPH--hemoprotein reductase] + O2 = 6beta,16alpha,17alpha-trihydroxyprogesterone + oxidized [NADPH--hemoprotein reductase] + H2O + H(+). The catalysed reaction is 17alpha-hydroxypregnenolone + reduced [NADPH--hemoprotein reductase] + O2 = 3beta-hydroxyandrost-5-en-17-one + acetate + oxidized [NADPH--hemoprotein reductase] + H2O + 2 H(+). It catalyses the reaction 16alpha,17alpha-dihydroxypregnenolone + reduced [NADPH--hemoprotein reductase] + O2 = 3beta,16alpha-dihydroxy-androst-5-en-17-one + acetate + oxidized [NADPH--hemoprotein reductase] + H2O + 2 H(+). The enzyme catalyses 3beta-hydroxyandrost-5-en-17-one + reduced [NADPH--hemoprotein reductase] + O2 = 3beta,16alpha-dihydroxy-androst-5-en-17-one + oxidized [NADPH--hemoprotein reductase] + H2O + H(+). It carries out the reaction androst-4-ene-3,17-dione + reduced [NADPH--hemoprotein reductase] + O2 = 16alpha-hydroxyandrost-4-ene-3,17-dione + oxidized [NADPH--hemoprotein reductase] + H2O + H(+). Its pathway is steroid hormone biosynthesis. It participates in steroid biosynthesis; glucocorticoid biosynthesis. With respect to regulation, regulated predominantly by intracellular cAMP levels. The 17,20-lyase activity is stimulated by cytochrome b5, which acts as an allosteric effector increasing the Vmax of the lyase activity. Functionally, a cytochrome P450 monooxygenase involved in corticoid and androgen biosynthesis. Catalyzes 17-alpha hydroxylation of C21 steroids, which is common for both pathways. A second oxidative step, required only for androgen synthesis, involves an acyl-carbon cleavage. The 17-alpha hydroxy intermediates, as part of adrenal glucocorticoids biosynthesis pathway, are precursors of cortisol. Hydroxylates steroid hormones, pregnenolone and progesterone to form 17-alpha hydroxy metabolites, followed by the cleavage of the C17-C20 bond to form C19 steroids, dehydroepiandrosterone (DHEA) and androstenedione. Has 16-alpha hydroxylase activity. Catalyzes 16-alpha hydroxylation of 17-alpha hydroxy pregnenolone, followed by the cleavage of the C17-C20 bond to form 16-alpha-hydroxy DHEA. Also 16-alpha hydroxylates androgens, relevant for estriol synthesis. Mechanistically, uses molecular oxygen inserting one oxygen atom into a substrate, and reducing the second into a water molecule, with two electrons provided by NADPH via cytochrome P450 reductase (CPR; NADPH-ferrihemoprotein reductase). In Bison bison (American bison), this protein is Steroid 17-alpha-hydroxylase/17,20 lyase (CYP17A1).